We begin with the raw amino-acid sequence, 484 residues long: Glycogen synthase (484 aa).

Lys15 contributes to the ADP-alpha-D-glucose binding site.

Belongs to the glycosyltransferase 1 family. Bacterial/plant glycogen synthase subfamily.

The enzyme catalyses [(1-&gt;4)-alpha-D-glucosyl](n) + ADP-alpha-D-glucose = [(1-&gt;4)-alpha-D-glucosyl](n+1) + ADP + H(+). Its pathway is glycan biosynthesis; glycogen biosynthesis. Functionally, synthesizes alpha-1,4-glucan chains using ADP-glucose. The polypeptide is Glycogen synthase (Syntrophotalea carbinolica (strain DSM 2380 / NBRC 103641 / GraBd1) (Pelobacter carbinolicus)).